Here is a 447-residue protein sequence, read N- to C-terminus: D-ribitol-5-phosphate cytidylyltransferase (447 aa).

The protein belongs to the IspD/TarI cytidylyltransferase family. IspD subfamily. Homodimer.

The protein resides in the cytoplasm. The protein localises to the cytosol. It catalyses the reaction D-ribitol 5-phosphate + CTP + H(+) = CDP-L-ribitol + diphosphate. The enzyme catalyses D-ribose 5-phosphate + CTP + H(+) = CDP-D-ribose + diphosphate. It carries out the reaction D-ribulose 5-phosphate + CTP + H(+) = CDP-D-ribulose + diphosphate. Its pathway is protein modification; protein glycosylation. Cytidylyltransferase required for protein O-linked mannosylation. Catalyzes the formation of CDP-ribitol nucleotide sugar from D-ribitol 5-phosphate. CDP-ribitol is a substrate of FKTN during the biosynthesis of the phosphorylated O-mannosyl trisaccharide (N-acetylgalactosamine-beta-3-N-acetylglucosamine-beta-4-(phosphate-6-)mannose), a carbohydrate structure present in alpha-dystroglycan (DAG1), which is required for binding laminin G-like domain-containing extracellular proteins with high affinity. Shows activity toward other pentose phosphate sugars and mediates formation of CDP-ribulose or CDP-ribose using CTP and ribulose-5-phosphate or ribose-5-phosphate, respectively. Not involved in dolichol production. The polypeptide is D-ribitol-5-phosphate cytidylyltransferase (Crppa) (Mus musculus (Mouse)).